The primary structure comprises 654 residues: tRNA 5-methylaminomethyl-2-thiouridine biosynthesis bifunctional protein MnmC (654 aa).

A tRNA (mnm(5)s(2)U34)-methyltransferase region spans residues methionine 1–valine 236. An FAD-dependent cmnm(5)s(2)U34 oxidoreductase region spans residues isoleucine 262–lysine 654.

In the N-terminal section; belongs to the methyltransferase superfamily. tRNA (mnm(5)s(2)U34)-methyltransferase family. The protein in the C-terminal section; belongs to the DAO family. The cofactor is FAD.

It localises to the cytoplasm. It catalyses the reaction 5-aminomethyl-2-thiouridine(34) in tRNA + S-adenosyl-L-methionine = 5-methylaminomethyl-2-thiouridine(34) in tRNA + S-adenosyl-L-homocysteine + H(+). In terms of biological role, catalyzes the last two steps in the biosynthesis of 5-methylaminomethyl-2-thiouridine (mnm(5)s(2)U) at the wobble position (U34) in tRNA. Catalyzes the FAD-dependent demodification of cmnm(5)s(2)U34 to nm(5)s(2)U34, followed by the transfer of a methyl group from S-adenosyl-L-methionine to nm(5)s(2)U34, to form mnm(5)s(2)U34. The chain is tRNA 5-methylaminomethyl-2-thiouridine biosynthesis bifunctional protein MnmC from Pseudomonas putida (strain ATCC 700007 / DSM 6899 / JCM 31910 / BCRC 17059 / LMG 24140 / F1).